Consider the following 369-residue polypeptide: Phospho-N-acetylmuramoyl-pentapeptide-transferase (369 aa).

Transmembrane regions (helical) follow at residues 13–33 (ISGI…ALTL), 49–69 (LPLL…VPLL), 95–115 (MGGI…SNFA), 119–139 (LAVS…DWQI), 154–174 (LALQ…NQPA), 183–203 (WVSF…FVLV), 215–235 (IDGL…AIVA), 237–257 (TSPA…GFLA), 281–301 (AVAL…IFFV), and 346–366 (VVSS…AIAS).

This sequence belongs to the glycosyltransferase 4 family. MraY subfamily. Mg(2+) serves as cofactor.

The protein resides in the cell inner membrane. It catalyses the reaction UDP-N-acetyl-alpha-D-muramoyl-L-alanyl-gamma-D-glutamyl-meso-2,6-diaminopimeloyl-D-alanyl-D-alanine + di-trans,octa-cis-undecaprenyl phosphate = di-trans,octa-cis-undecaprenyl diphospho-N-acetyl-alpha-D-muramoyl-L-alanyl-D-glutamyl-meso-2,6-diaminopimeloyl-D-alanyl-D-alanine + UMP. The protein operates within cell wall biogenesis; peptidoglycan biosynthesis. Its function is as follows. Catalyzes the initial step of the lipid cycle reactions in the biosynthesis of the cell wall peptidoglycan: transfers peptidoglycan precursor phospho-MurNAc-pentapeptide from UDP-MurNAc-pentapeptide onto the lipid carrier undecaprenyl phosphate, yielding undecaprenyl-pyrophosphoryl-MurNAc-pentapeptide, known as lipid I. This is Phospho-N-acetylmuramoyl-pentapeptide-transferase from Nostoc sp. (strain PCC 7120 / SAG 25.82 / UTEX 2576).